Reading from the N-terminus, the 300-residue chain is Cation-efflux pump FieF (300 aa).

The next 4 helical transmembrane spans lie at 12–32 (AAIAATAMASLLLLIKIFAWW), 39–59 (ILAALVDSLVDIGASLTNLLV), 82–102 (AALAQSMFISGSALFLFLTGI), and 114–134 (PGVGVIVTIVALICTIILVSF). 2 residues coordinate Zn(2+): Asp45 and Asp49. Positions 153 and 157 each coordinate Zn(2+). 2 helical membrane-spanning segments follow: residues 156–176 (SDVMMNGAILLALGLSWYGWH) and 178–198 (ADALFALGIGIYILYSALRMG).

The protein belongs to the cation diffusion facilitator (CDF) transporter (TC 2.A.4) family. FieF subfamily. As to quaternary structure, homodimer.

It localises to the cell inner membrane. It carries out the reaction Zn(2+)(in) + H(+)(out) = Zn(2+)(out) + H(+)(in). The catalysed reaction is Cd(2+)(in) + H(+)(out) = Cd(2+)(out) + H(+)(in). It catalyses the reaction Fe(2+)(in) + H(+)(out) = Fe(2+)(out) + H(+)(in). Its function is as follows. Divalent metal cation transporter which exports Zn(2+), Cd(2+) and possibly Fe(2+). May be involved in zinc and iron detoxification by efflux. This Escherichia coli O157:H7 (strain EC4115 / EHEC) protein is Cation-efflux pump FieF.